Reading from the N-terminus, the 371-residue chain is 2-oxoadipate dioxygenase/decarboxylase, chloroplastic (371 aa).

The transit peptide at 1-50 (MISLHSSAIKASLYGSFPSSLRSTLSVSFSAGSLIRLPSVGKRNLSVVVS) directs the protein to the chloroplast. 2-oxoadipate contacts are provided by His113 and Arg117. Residue His113 coordinates Fe(2+). Residue His250 participates in Fe(2+) binding. 2 residues coordinate 2-oxoadipate: Gln296 and Tyr320. Glu322 contributes to the Fe(2+) binding site.

The protein belongs to the 2-oxoadipate dioxygenase/decarboxylase family. The cofactor is Fe(2+).

The protein localises to the plastid. Its subcellular location is the chloroplast. The enzyme catalyses 2-oxoadipate + O2 = (R)-2-hydroxyglutarate + CO2. The protein operates within amino-acid degradation. In terms of biological role, catalyzes the decarboxylation and hydroxylation of 2-oxoadipate (2OA) to form D-2-hydroxyglutarate (D-2-HGA). Is involved in a D-lysine catabolic pathway. The polypeptide is 2-oxoadipate dioxygenase/decarboxylase, chloroplastic (Arabidopsis thaliana (Mouse-ear cress)).